Here is a 595-residue protein sequence, read N- to C-terminus: Probable Xaa-Pro aminopeptidase CHGG_02942 (595 aa).

Residues 51 to 76 are disordered; sequence KSGPSSSNLSPSTLSTEKTSSDSSGV. Residues 52-66 show a composition bias toward low complexity; sequence SGPSSSNLSPSTLST. Mn(2+) is bound by residues aspartate 334, aspartate 345, glutamate 541, and glutamate 563.

This sequence belongs to the peptidase M24B family. Mn(2+) is required as a cofactor.

The catalysed reaction is Release of any N-terminal amino acid, including proline, that is linked to proline, even from a dipeptide or tripeptide.. Its function is as follows. Catalyzes the removal of a penultimate prolyl residue from the N-termini of peptides. In Chaetomium globosum (strain ATCC 6205 / CBS 148.51 / DSM 1962 / NBRC 6347 / NRRL 1970) (Soil fungus), this protein is Probable Xaa-Pro aminopeptidase CHGG_02942.